The primary structure comprises 714 residues: Fatty acid oxidation complex subunit alpha (714 aa).

Positions 1–190 (MEMASAFTLN…KLGLVDDVVP (190 aa)) are enoyl-CoA hydratase. The tract at residues 306–714 (APLNSVGILG…FWKTTATDLQ (409 aa)) is 3-hydroxyacyl-CoA dehydrogenase.

The protein in the N-terminal section; belongs to the enoyl-CoA hydratase/isomerase family. In the central section; belongs to the 3-hydroxyacyl-CoA dehydrogenase family. In terms of assembly, heterotetramer of two alpha chains (FadJ) and two beta chains (FadI).

It localises to the cytoplasm. It carries out the reaction a (3S)-3-hydroxyacyl-CoA = a (2E)-enoyl-CoA + H2O. The enzyme catalyses a 4-saturated-(3S)-3-hydroxyacyl-CoA = a (3E)-enoyl-CoA + H2O. It catalyses the reaction a (3S)-3-hydroxyacyl-CoA + NAD(+) = a 3-oxoacyl-CoA + NADH + H(+). The catalysed reaction is (3S)-3-hydroxybutanoyl-CoA = (3R)-3-hydroxybutanoyl-CoA. It participates in lipid metabolism; fatty acid beta-oxidation. Functionally, catalyzes the formation of a hydroxyacyl-CoA by addition of water on enoyl-CoA. Also exhibits 3-hydroxyacyl-CoA epimerase and 3-hydroxyacyl-CoA dehydrogenase activities. The protein is Fatty acid oxidation complex subunit alpha of Escherichia coli (strain UTI89 / UPEC).